A 627-amino-acid chain; its full sequence is Pro-interleukin-16 (627 aa).

Disordered stretches follow at residues 34–136 (HMPL…SIKQ), 162–267 (SSGE…LTRS), and 316–337 (GASPTSLSNEDSAANGCAETSG). S217 carries the phosphoserine modification. Polar residues predominate over residues 318–337 (SPTSLSNEDSAANGCAETSG). The segment at 401–497 (KQLDSIHVTI…IVTRKLTPET (97 aa)) is interaction with PPP1R12A, PPP1R12B and PPP1R12C. PDZ domains follow at residues 407–492 (HVTI…VTRK) and 529–614 (TVTL…IKRK).

Homotetramer. Pro-interleukin-16 interacts (via PDZ 2 domain) with PPP1R12A, PPP1R12B and PPP1R12C. Pro-interleukin-16 interacts with GRIN2A. Pro-interleukin-16 interacts with GABPB1. Pro-interleukin-16 interacts (via PDZ 3 domain) with HDAC3.

Its subcellular location is the secreted. The protein resides in the cytoplasm. It localises to the nucleus. Interleukin-16 stimulates a migratory response in CD4+ lymphocytes, monocytes, and eosinophils. Primes CD4+ T-cells for IL-2 and IL-15 responsiveness. Also induces T-lymphocyte expression of interleukin 2 receptor. Ligand for CD4. In terms of biological role, pro-interleukin-16 is involved in cell cycle progression in T-cells. Appears to be involved in transcriptional regulation of SKP2 and is probably part of a transcriptional repression complex on the core promoter of the SKP2 gene. May act as a scaffold for GABPB1 (the DNA-binding subunit the GABP transcription factor complex) and HDAC3 thus maintaining transcriptional repression and blocking cell cycle progression in resting T-cells. The chain is Pro-interleukin-16 (IL16) from Saimiri sciureus (Common squirrel monkey).